The chain runs to 173 residues: Superoxide dismutase [Cu-Zn] (173 aa).

A signal peptide spans 1–19; sequence MKSLFIASTMVLMAFPAFA. H67, H69, and H92 together coordinate Cu cation. C74 and C169 form a disulfide bridge. The Zn(2+) site is built by H92, H101, H109, and D112. H147 is a Cu cation binding site.

The protein belongs to the Cu-Zn superoxide dismutase family. In terms of assembly, homodimer. Cu cation is required as a cofactor. It depends on Zn(2+) as a cofactor.

Its subcellular location is the periplasm. It carries out the reaction 2 superoxide + 2 H(+) = H2O2 + O2. In terms of biological role, destroys radicals which are normally produced within the cells and which are toxic to biological systems. This is Superoxide dismutase [Cu-Zn] (sodC) from Brucella abortus biovar 1 (strain 9-941).